The following is a 231-amino-acid chain: Probable glutathione S-transferase GSTU1 (231 aa).

One can recognise a GST N-terminal domain in the interval 5 to 84 (KELVLLDFWV…YLDDAFPGTP (80 aa)). Glutathione contacts are provided by residues Ser15, Lys42, Ile56, and 68–69 (ES). One can recognise a GST C-terminal domain in the interval 97 to 220 (AAYARATARF…LPSPEKVYDF (124 aa)).

It belongs to the GST superfamily. Tau family.

The catalysed reaction is RX + glutathione = an S-substituted glutathione + a halide anion + H(+). Its function is as follows. Conjugation of reduced glutathione to a wide number of exogenous and endogenous hydrophobic electrophiles. This Oryza sativa subsp. japonica (Rice) protein is Probable glutathione S-transferase GSTU1 (GSTU1).